We begin with the raw amino-acid sequence, 1086 residues long: DNA polymerase (1086 aa).

The interval 638–657 (STTRKPVDDVEEHSECNGFT) is disordered.

This sequence belongs to the DNA polymerase type-B family.

It carries out the reaction DNA(n) + a 2'-deoxyribonucleoside 5'-triphosphate = DNA(n+1) + diphosphate. Its function is as follows. Replicates the viral genome. Host DNA polymerases cannot substitute for the viral enzyme in this process. The protein is DNA polymerase of Noctuidae (owlet moths).